Here is a 325-residue protein sequence, read N- to C-terminus: MSAPFVLAVPSKGRLQENTEAFFARAGLKLSKAGGARDYRGTIAGLDNVEVAYLSASEIAAQLSRGLAHLGVTGEDLVRENIADADKRVSLIEGLGFGYADVVVAVPQAWIDVRTMADLDDVTTGFREQHHMRMRVATKFVNLTRAFFQNHGITDYRIVESAGATEGAPAAGSAELIVDITTTGATLAANGLRVLDDGMILRSQANLVASRDADWSPQARETARVILDHIAARARANKYREVRTRFRQCDAALLGEAHSRFGVEAPFGGPTSSGMLTLHCPPGQLYALASFLREHGAETVSVVSLDYVFDRENPLFAKLEAFLRR.

Belongs to the ATP phosphoribosyltransferase family. Long subfamily. It depends on Mg(2+) as a cofactor.

The protein resides in the cytoplasm. It carries out the reaction 1-(5-phospho-beta-D-ribosyl)-ATP + diphosphate = 5-phospho-alpha-D-ribose 1-diphosphate + ATP. The protein operates within amino-acid biosynthesis; L-histidine biosynthesis; L-histidine from 5-phospho-alpha-D-ribose 1-diphosphate: step 1/9. Feedback inhibited by histidine. Catalyzes the condensation of ATP and 5-phosphoribose 1-diphosphate to form N'-(5'-phosphoribosyl)-ATP (PR-ATP). Has a crucial role in the pathway because the rate of histidine biosynthesis seems to be controlled primarily by regulation of HisG enzymatic activity. This chain is ATP phosphoribosyltransferase, found in Bradyrhizobium diazoefficiens (strain JCM 10833 / BCRC 13528 / IAM 13628 / NBRC 14792 / USDA 110).